The following is a 468-amino-acid chain: Argininosuccinate lyase (468 aa).

The protein belongs to the lyase 1 family. Argininosuccinate lyase subfamily.

The protein localises to the cytoplasm. It carries out the reaction 2-(N(omega)-L-arginino)succinate = fumarate + L-arginine. The protein operates within amino-acid biosynthesis; L-arginine biosynthesis; L-arginine from L-ornithine and carbamoyl phosphate: step 3/3. The sequence is that of Argininosuccinate lyase from Paraburkholderia phymatum (strain DSM 17167 / CIP 108236 / LMG 21445 / STM815) (Burkholderia phymatum).